Here is a 239-residue protein sequence, read N- to C-terminus: Ribonuclease PH (239 aa).

Residues Arg-86 and 124 to 126 (GTR) contribute to the phosphate site.

It belongs to the RNase PH family. In terms of assembly, homohexameric ring arranged as a trimer of dimers.

The enzyme catalyses tRNA(n+1) + phosphate = tRNA(n) + a ribonucleoside 5'-diphosphate. Functionally, phosphorolytic 3'-5' exoribonuclease that plays an important role in tRNA 3'-end maturation. Removes nucleotide residues following the 3'-CCA terminus of tRNAs; can also add nucleotides to the ends of RNA molecules by using nucleoside diphosphates as substrates, but this may not be physiologically important. Probably plays a role in initiation of 16S rRNA degradation (leading to ribosome degradation) during starvation. The protein is Ribonuclease PH of Sinorhizobium medicae (strain WSM419) (Ensifer medicae).